The primary structure comprises 1157 residues: Hephaestin (1157 aa).

The signal sequence occupies residues 1–23 (MKAGHLLWALLLMHSLCSLPTDG). Plastocyanin-like domains lie at 24–206 (AIRN…LITC), 218–366 (QRKD…VDSC), 370–559 (PPVE…LLVC), 569–717 (KQKG…VSQC), 730–902 (ASRV…LVIC), and 910–1066 (NGGR…SHEE). At 24 to 1109 (AIRNYYLGIQ…PVKNVEILSS (1086 aa)) the chain is on the extracellular side. 2 N-linked (GlcNAc...) asparagine glycosylation sites follow: N49 and N54. The Na(+) site is built by G70 and Y73. 2 residues coordinate Cu(2+): H126 and H128. Residue H126 coordinates O2. Ca(2+) is bound by residues K134, D152, and D153. Residue N164 is glycosylated (N-linked (GlcNAc...) asparagine). A disulfide bridge links C180 with C206. Positions 186 and 188 each coordinate Cu(2+). Position 186 (H186) interacts with O2. N236 carries N-linked (GlcNAc...) asparagine glycosylation. S265 is a Na(+) binding site. A disulfide bridge links C285 with C366. Cu(2+) is bound by residues H304, C347, and H352. Y416, G425, and Y428 together coordinate Na(+). A disulfide bridge links C533 with C559. A glycan (N-linked (GlcNAc...) asparagine) is linked at N587. S616 serves as a coordination point for Na(+). A disulfide bond links C636 and C717. Cu(2+) is bound by residues H655, C698, H703, and M708. 2 N-linked (GlcNAc...) asparagine glycosylation sites follow: N713 and N757. Residues F768 and G777 each coordinate Na(+). Cysteines 876 and 902 form a disulfide. A glycan (N-linked (GlcNAc...) asparagine) is linked at N930. Positions 999, 1002, 1004, 1044, 1045, 1046, 1050, and 1055 each coordinate Cu(2+). O2-binding residues include H1002 and H1004. H1046 provides a ligand contact to O2. Residues 1110–1130 (ALIAICVVLLLIALALGGVVW) traverse the membrane as a helical segment. Topologically, residues 1131–1157 (YQHRQRKLRRNRRSILDDSFKLLSLKQ) are cytoplasmic. S1144, S1149, and S1154 each carry phosphoserine.

This sequence belongs to the multicopper oxidase family. As to quaternary structure, part of a complex composed of SLC40A1/ferroportin, TF/transferrin and HEPH/hephaestin that transfers iron from cells to transferrin. Cu cation is required as a cofactor. As to expression, highly expressed in small intestine and colon.

The protein localises to the basolateral cell membrane. The catalysed reaction is 4 Fe(2+) + O2 + 4 H(+) = 4 Fe(3+) + 2 H2O. Functionally, plasma membrane ferroxidase that mediates the extracellular conversion of ferrous/Fe(2+) iron into its ferric/Fe(3+) form. Couples ferroportin which specifically exports ferrous/Fe(2+) iron from cells to transferrin that only binds and shuttles extracellular ferric/Fe(3+) iron throughout the body. By helping iron transfer from cells to blood mainly contributes to dietary iron absorption by the intestinal epithelium and more generally regulates iron levels in the body. This Rattus norvegicus (Rat) protein is Hephaestin.